We begin with the raw amino-acid sequence, 216 residues long: Adenylate kinase (216 aa).

ATP is bound at residue 10 to 15 (GAGKGT). The segment at 30–59 (STGDMFRAAMKAETEMGLQAKSFIDKGALV) is NMP. Residues Thr-31, Arg-36, 57–59 (ALV), 85–88 (GFPR), and Gln-92 each bind AMP. Residues 126–163 (GRRICKECGATYHLEFNPPAKADVCDKCGGELYQRSDD) form an LID region. ATP is bound at residue Arg-127. The Zn(2+) site is built by Cys-130 and Cys-133. Residue 136–137 (TY) coordinates ATP. 2 residues coordinate Zn(2+): Cys-150 and Cys-153. The AMP site is built by Arg-160 and Arg-171. An ATP-binding site is contributed by Gln-199.

This sequence belongs to the adenylate kinase family. Monomer.

Its subcellular location is the cytoplasm. It catalyses the reaction AMP + ATP = 2 ADP. The protein operates within purine metabolism; AMP biosynthesis via salvage pathway; AMP from ADP: step 1/1. In terms of biological role, catalyzes the reversible transfer of the terminal phosphate group between ATP and AMP. Plays an important role in cellular energy homeostasis and in adenine nucleotide metabolism. The protein is Adenylate kinase of Bacillus cereus (strain G9842).